Here is a 405-residue protein sequence, read N- to C-terminus: Probable tRNA sulfurtransferase (405 aa).

Positions 60-165 (DQVMARLSQV…REAIYLSTKT (106 aa)) constitute a THUMP domain. ATP-binding positions include 183 to 184 (ML), 208 to 209 (HF), Arg-265, Gly-287, and Gln-296.

This sequence belongs to the ThiI family.

Its subcellular location is the cytoplasm. The catalysed reaction is [ThiI sulfur-carrier protein]-S-sulfanyl-L-cysteine + a uridine in tRNA + 2 reduced [2Fe-2S]-[ferredoxin] + ATP + H(+) = [ThiI sulfur-carrier protein]-L-cysteine + a 4-thiouridine in tRNA + 2 oxidized [2Fe-2S]-[ferredoxin] + AMP + diphosphate. It catalyses the reaction [ThiS sulfur-carrier protein]-C-terminal Gly-Gly-AMP + S-sulfanyl-L-cysteinyl-[cysteine desulfurase] + AH2 = [ThiS sulfur-carrier protein]-C-terminal-Gly-aminoethanethioate + L-cysteinyl-[cysteine desulfurase] + A + AMP + 2 H(+). Its pathway is cofactor biosynthesis; thiamine diphosphate biosynthesis. Catalyzes the ATP-dependent transfer of a sulfur to tRNA to produce 4-thiouridine in position 8 of tRNAs, which functions as a near-UV photosensor. Also catalyzes the transfer of sulfur to the sulfur carrier protein ThiS, forming ThiS-thiocarboxylate. This is a step in the synthesis of thiazole, in the thiamine biosynthesis pathway. The sulfur is donated as persulfide by IscS. This Lacticaseibacillus casei (strain BL23) (Lactobacillus casei) protein is Probable tRNA sulfurtransferase.